The following is a 119-amino-acid chain: Membrane-anchored ubiquitin-fold protein 3 (119 aa).

In terms of domain architecture, Ubiquitin-like spans 8–76; the sequence is IEVKFRLFDG…NNRTLAESRV (69 aa). At C116 the chain carries Cysteine methyl ester. C116 is lipidated: S-geranylgeranyl cysteine. A propeptide spans 117–119 (removed in mature form); sequence TIL.

It localises to the cell membrane. Its function is as follows. May serve as docking site to facilitate the association of other proteins to the plasma membrane. The sequence is that of Membrane-anchored ubiquitin-fold protein 3 (MUB3) from Oryza sativa subsp. japonica (Rice).